Consider the following 676-residue polypeptide: Intraflagellar transport protein 81 homolog (676 aa).

Serine 2 is subject to N-acetylserine. The segment at 2–121 (SDQIKFIMDS…LKKRAYLARF (120 aa)) is CH (calponin-homology)-like region. Position 61 is a phosphothreonine (threonine 61). 4 coiled-coil regions span residues 132–258 (LQDE…ADAK), 306–389 (HSDL…FDGT), 416–456 (QIIA…KGIS), and 490–622 (VKKL…REKQ).

This sequence belongs to the IFT81 family. Component of the IFT complex B, at least composed of IFT20, IFT22, IFT25, IFT27, IFT46, IFT52, TRAF3IP1/IFT54, IFT57, IFT74, IFT80, IFT81, and IFT88. Interacts with IFT74; the interaction is direct: within the IFT complex B, IFT74 and IFT81 mediate the transport of tubulin within the cilium. Interacts with tubulin; the interaction is direct. Interacts with IFT57 and IFT70B. Interacts with RABL2/RABL2A; binding is equal in the presence of GTP or GDP. Interacts with IFT88. Interacts (via the IFT74/IFT81 heterodimer) with RABL2B. Interacts with CFAP61. Highly expressed in testis, moderately in ovary, heart, liver, skeletal muscle, kidney and pancreas, low in prostate, brain, placenta and lung and not detected in spleen, thymus, small intestine and colon. Isoform CDV-1R is abundantly expressed in testis.

Its subcellular location is the cell projection. It is found in the cilium. The protein localises to the cytoplasm. The protein resides in the cytoskeleton. It localises to the cilium basal body. In terms of biological role, component of the intraflagellar transport (IFT) complex B: together with IFT74, forms a tubulin-binding module that specifically mediates transport of tubulin within the cilium. Binds tubulin via its CH (calponin-homology)-like region. Required for ciliogenesis. Required for proper regulation of SHH signaling. Plays an important role during spermatogenesis by modulating the assembly and elongation of the sperm flagella. This chain is Intraflagellar transport protein 81 homolog (IFT81), found in Homo sapiens (Human).